Reading from the N-terminus, the 369-residue chain is Fructose-bisphosphate aldolase (369 aa).

A dihydroxyacetone phosphate-binding site is contributed by Asp40. Positions 42 and 45 each coordinate D-glyceraldehyde 3-phosphate. Beta-D-fructose 1,6-bisphosphate is bound at residue Arg49. Lys113 is a binding site for D-glyceraldehyde 3-phosphate. A dihydroxyacetone phosphate-binding site is contributed by Lys152. Glu195 is a binding site for D-glyceraldehyde 3-phosphate. Glu195 serves as the catalytic Proton acceptor. The dihydroxyacetone phosphate site is built by Lys237, Ser279, and Gly280. Lys237 serves as the catalytic Schiff-base intermediate with dihydroxyacetone phosphate. Beta-D-fructose 1,6-bisphosphate is bound by residues 279–281 (SGG) and Ser307. Residues Gly309 and Arg310 each coordinate dihydroxyacetone phosphate. Position 310 (Arg310) interacts with beta-D-fructose 1,6-bisphosphate.

The protein belongs to the class I fructose-bisphosphate aldolase family. As to quaternary structure, homotetramer. Interacts with TRAP (via cytoplasmic domain); the interaction prevents substrate binding and thereby inhibits aldolase activity. Interacts with MTRAP (via cytoplasmic domain); MTRAP phosphorylation may increase the binding to FBPA. Interact with RH1 (via cytoplasmic domain). Interacts with RH2b (via cytoplasmic domain). Interacts with RH4 (via cytoplasmic domain). Interacts with AMA1 (via cytoplasmic domain); the interaction is weak, however it may be increased upon AMA1 phosphorylation. Interacts with EBA140 (via cytoplasmic domain); the interaction is weak. Interacts with EBA175 (via cytoplasmic domain); the interaction is weak. Interacts with EBA181 (via cytoplasmic domain); the interaction is weak. Interacts with G-actin and F-actin. May interact with ACT2/actin II; the interaction inhibits FBPA catalytic activity. Interacts with human SLC4A1/band 3 (via N-terminus); the interaction inhibits FBPA catalytic activity.

Its subcellular location is the cytoplasm. The protein localises to the membrane. The protein resides in the host cell membrane. The catalysed reaction is beta-D-fructose 1,6-bisphosphate = D-glyceraldehyde 3-phosphate + dihydroxyacetone phosphate. Its pathway is carbohydrate degradation; glycolysis; D-glyceraldehyde 3-phosphate and glycerone phosphate from D-glucose: step 4/4. The cytoplasmic tail of TRAP and probably other adhesins acts as a competitive inhibitor as the binding sites of the glycolytic substrate fructose 1,6-bisphosphate and TRAP partially overlap. In terms of biological role, plays a key role in glycolysis by catalyzing the cleavage of fructose 1,6-bisphosphate into dihydroxyacetone phosphate and glyceraldehyde 3-phosphate. Independently of its catalytic activity, connects the actin filaments, and thus the actomyosin motor, to cell surface adhesins of the thrombospondin-related anonymous protein (TRAP), the erythrocyte binding ligand (EBL) and reticulocyte binding homolog (RH) protein families; this interaction is probably involved in transducing the motor force across the parasite surface required for sporozoite and ookinete gliding motility and merozoite invasion. Stimulates actin polymerisation. The chain is Fructose-bisphosphate aldolase from Plasmodium falciparum (isolate 3D7).